We begin with the raw amino-acid sequence, 316 residues long: uncharacterized protein (316 aa).

Belongs to the chlamydial CPn_0441/CT_007/TC_0275 family.

This is an uncharacterized protein from Chlamydia trachomatis serovar D (strain ATCC VR-885 / DSM 19411 / UW-3/Cx).